The sequence spans 357 residues: Putative ABC transporter ATP-binding protein MG303 (357 aa).

One can recognise an ABC transporter domain in the interval 72–312 (LFFNNISVFV…TSWLMQYGIT (241 aa)). ATP is bound at residue 107 to 114 (GESGSGKT).

It belongs to the ABC transporter superfamily.

This Mycoplasma genitalium (strain ATCC 33530 / DSM 19775 / NCTC 10195 / G37) (Mycoplasmoides genitalium) protein is Putative ABC transporter ATP-binding protein MG303.